The primary structure comprises 195 residues: CASP-like protein IN26 (195 aa).

The Cytoplasmic portion of the chain corresponds to 1-26 (VAPTGSVETEKAGPSYKPKEYYKVTE). A helical transmembrane segment spans residues 27-47 (AILRLLLLASLVVAVVVMVTS). Topologically, residues 48 to 75 (KETELISVKLDPFPPFMLPLTAKFTQSP) are extracellular. A helical membrane pass occupies residues 76 to 96 (AFIYFVAGLSVAGLYTIISTL). At 97–120 (ASFYNLLIKPGFCPALVSHFIILD) the chain is on the cytoplasmic side. A helical membrane pass occupies residues 121 to 143 (VVMLGIVGTATGAAGGVAYIGLK). At 144–163 (GNSHVGWTKVCNKYGKLCTH) the chain is on the extracellular side. A helical membrane pass occupies residues 164–184 (LGASLAVSFFAFIVLLLLIIL). Residues 185-195 (SIHSLSKKIPK) are Cytoplasmic-facing.

The protein belongs to the Casparian strip membrane proteins (CASP) family. As to quaternary structure, homodimer and heterodimers.

Its subcellular location is the cell membrane. The chain is CASP-like protein IN26 (IN26) from Ipomoea nil (Japanese morning glory).